Here is an 81-residue protein sequence, read N- to C-terminus: GYKHQCRDRCYGTCGTSCKYGASRPSCACALHGGYCCVARPYHYPYPHPRPVPLPAPAPRPAPHYPVHHPKWPHWRPHYKA.

Expressed in oviduct, where expression levels are higher in uterine sections than in tuba sections. No expression detected in small intestine and liver (at protein level).

The protein localises to the nucleus. The polypeptide is Tissue- and phase-specific nuclear protein (Podarcis siculus (Italian wall lizard)).